The following is an 83-amino-acid chain: Neurotoxin LmNaTx34.5 (83 aa).

An N-terminal signal peptide occupies residues 1-15; sequence FILVVIALMVIEVKS. An LCN-type CS-alpha/beta domain is found at 16 to 82; the sequence is DGYLMVRAGR…IWTYEKNTCS (67 aa). 4 disulfide bridges follow: Cys-29-Cys-81, Cys-33-Cys-54, Cys-40-Cys-61, and Cys-44-Cys-63.

The protein belongs to the long (4 C-C) scorpion toxin superfamily. Sodium channel inhibitor family. Beta subfamily. In terms of tissue distribution, expressed by the venom gland.

The protein localises to the secreted. Its function is as follows. Binds voltage-independently at site-4 of sodium channels (Nav) and shift the voltage of activation toward more negative potentials thereby affecting sodium channel activation and promoting spontaneous and repetitive firing. This Lychas mucronatus (Chinese swimming scorpion) protein is Neurotoxin LmNaTx34.5.